The sequence spans 1284 residues: ABC multidrug transporter atrC (1284 aa).

Basic and acidic residues predominate over residues 1 to 11; that stretch reads MKSTAESKETP. A disordered region spans residues 1–24; it reads MKSTAESKETPSQDESTTSVPCTE. Transmembrane regions (helical) follow at residues 55–75, 99–119, 178–198, 203–223, 282–302, and 320–340; these read AVAILAACASGAGIALQNLIF, AAELALYFVYLGIARLVLSYT, IGLLFQGLAAFVTLSLSRLWC, TLICICIPVATIGTTGVVAAV, LLGLLFSAEYTIIYLGYGLAF, and IFTVLLSVVIASINLTLLAPY. The ABC transmembrane type-1 1 domain maps to 55–346; it reads AVAILAACAS…LAPYSIEFSR (292 aa). The 246-residue stretch at 381-626 folds into the ABC transporter 1 domain; sequence VELENVTFSY…DGVYAGLVKI (246 aa). N-linked (GlcNAc...) asparagine glycosylation is found at N385 and N401. Residue 416-423 participates in ATP binding; sequence GQSGSGKS. Residues N488 and N632 are each glycosylated (N-linked (GlcNAc...) asparagine). A run of 2 helical transmembrane segments spans residues 705–725 and 745–765; these read LVVLLGCLGGCAMYPGQAILM and FYASMLIVLAAGCLICYLAVG. Positions 705-992 constitute an ABC transmembrane type-1 2 domain; that stretch reads LVVLLGCLGG…LFQWSTSITK (288 aa). A glycan (N-linked (GlcNAc...) asparagine) is linked at N800. 4 helical membrane-spanning segments follow: residues 824-844, 846-866, 931-951, and 955-975; these read IALVVIAVLQVVTCGILAIAF, WKLGLVVVFGGIPPLVGAGMV, MICFGLTQCIEYWFQALGFWY, and LVSLGETSMYSFFVAFLSVFF. An N-linked (GlcNAc...) asparagine glycan is attached at N995. The 254-residue stretch at 1027–1280 folds into the ABC transporter 2 domain; sequence IAMDNVRFSY…GGLYRRMCEA (254 aa). 1062-1069 contributes to the ATP binding site; the sequence is GSSGCGKS. An N-linked (GlcNAc...) asparagine glycan is attached at N1122.

The protein belongs to the ABC transporter superfamily. ABCB family. Multidrug resistance exporter (TC 3.A.1.201) subfamily.

It is found in the cell membrane. In terms of biological role, pleiotropic ABC efflux transporter involved in the protection of the cells against a wide range of toxic compounds. The sequence is that of ABC multidrug transporter atrC from Emericella nidulans (Aspergillus nidulans).